The primary structure comprises 166 residues: Cyclin-dependent kinase 4 inhibitor D (166 aa).

The residue at position 1 (M1) is an N-acetylmethionine. ANK repeat units follow at residues 41–69 (FGKT…SPNV), 73–102 (SGTT…DVNA), 106–135 (TGAL…LHHR), and 138–166 (TGLT…VAPL).

This sequence belongs to the CDKN2 cyclin-dependent kinase inhibitor family. As to quaternary structure, interacts with CDK6.

The protein resides in the nucleus. It localises to the cytoplasm. In terms of biological role, interacts strongly with CDK4 and CDK6 and inhibits them. The chain is Cyclin-dependent kinase 4 inhibitor D (CDKN2D) from Bos taurus (Bovine).